Reading from the N-terminus, the 324-residue chain is Methionyl-tRNA formyltransferase (324 aa).

Position 114 to 117 (114 to 117 (SLLP)) interacts with (6S)-5,6,7,8-tetrahydrofolate.

The protein belongs to the Fmt family.

It catalyses the reaction L-methionyl-tRNA(fMet) + (6R)-10-formyltetrahydrofolate = N-formyl-L-methionyl-tRNA(fMet) + (6S)-5,6,7,8-tetrahydrofolate + H(+). In terms of biological role, attaches a formyl group to the free amino group of methionyl-tRNA(fMet). The formyl group appears to play a dual role in the initiator identity of N-formylmethionyl-tRNA by promoting its recognition by IF2 and preventing the misappropriation of this tRNA by the elongation apparatus. The polypeptide is Methionyl-tRNA formyltransferase (Azobacteroides pseudotrichonymphae genomovar. CFP2).